Reading from the N-terminus, the 336-residue chain is Abasic site processing protein HMCES (336 aa).

The active-site Nucleophile is C2. Thiazolidine linkage to a ring-opened DNA abasic site is present on C2. The disordered stretch occupies residues 26 to 51 (RQKCPKWRDGDTDKYQPSYNKSPQSN). Residues 40–51 (YQPSYNKSPQSN) show a composition bias toward polar residues. The active site involves E129. Residues 285–336 (QNKSPKKEESRSIIQSPKLSQFGAPPKKTSAGLMQQWLKKEDGEPSPKRAKK) are disordered. A compositionally biased stretch (basic and acidic residues) spans 322-336 (LKKEDGEPSPKRAKK).

This sequence belongs to the SOS response-associated peptidase family. Ubiquitination of the hmces DNA-protein cross-link by rfwd3 may promotes its degradation.

The protein localises to the chromosome. Its activity is regulated as follows. Formation and reversal of DNA-protein cross-link depends on DNA context. Catalyzes formation of the thiazolidine linkage in presence of abasic sites in single-stranded DNA. Mediates the reversal of the thiazolidine cross-link in presence of double stranded DNA. In terms of biological role, sensor of abasic sites in single-stranded DNA (ssDNA) required to preserve genome integrity by promoting error-free repair of abasic sites. Acts as an enzyme that recognizes and binds abasic sites in ssDNA at replication forks and chemically modifies the lesion by forming a covalent cross-link with DNA: forms a stable thiazolidine linkage between a ring-opened abasic site and the alpha-amino and sulfhydryl substituents of its N-terminal catalytic cysteine residue. The hmces DNA-protein cross-link is then either reversed or degraded. Hmces is able to catalyze the reversal of its thiazolidine cross-link and cycle between a cross-link and a non-cross-linked state depending on DNA context: mediates self-reversal of the thiazolidine cross-link in double stranded DNA, allowing apex1 to initiate downstream repair of abasic sites. The hmces DNA-protein cross-link can also be degraded by the sprtn metalloprotease following unfolding by the brip1/fancj helicase. Promotes error-free repair of abasic sites by protecting abasic sites from translesion synthesis (TLS) polymerases and endonucleases that are error-prone and would generate mutations and double-strand breaks. Acts as a protease: mediates autocatalytic processing of its N-terminal methionine in order to expose the catalytic cysteine. The HMCES DNA-protein cross-link is then either reversed or degraded. According to a model, the HMCES DNA-protein cross-link. In Xenopus laevis (African clawed frog), this protein is Abasic site processing protein HMCES.